The chain runs to 540 residues: Membrane protein insertase YidC (540 aa).

A run of 5 helical transmembrane segments spans residues leucine 7–tyrosine 27, isoleucine 345–tyrosine 365, leucine 415–phenylalanine 435, leucine 453–leucine 473, and proline 494–valine 514.

This sequence belongs to the OXA1/ALB3/YidC family. Type 1 subfamily. In terms of assembly, interacts with the Sec translocase complex via SecD. Specifically interacts with transmembrane segments of nascent integral membrane proteins during membrane integration.

Its subcellular location is the cell inner membrane. Required for the insertion and/or proper folding and/or complex formation of integral membrane proteins into the membrane. Involved in integration of membrane proteins that insert both dependently and independently of the Sec translocase complex, as well as at least some lipoproteins. Aids folding of multispanning membrane proteins. The polypeptide is Membrane protein insertase YidC (Mannheimia succiniciproducens (strain KCTC 0769BP / MBEL55E)).